A 655-amino-acid polypeptide reads, in one-letter code: MGTRASSITALASCSRTAGQVGATMVAGSLLLLGFLSTITAQPEQKTLSLPGTYRHVDRTTGQVLTCDKCPAGTYVSEHCTNMSLRVCSSCPAGTFTRHENGIERCHDCSQPCPWPMIERLPCAALTDRECICPPGMYQSNGTCAPHTVCPVGWGVRKKGTENEDVRCKQCARGTFSDVPSSVMKCKAHTDCLGQNLEVVKPGTKETDNVCGMRLFFSSTNPPSSGTVTFSHPEHMESHDVPSSTYEPQGMNSTDSNSTASVRTKVPSGIEEGTVPDNTSSTSGKEGTNRTLPNPPQVTHQQAPHHRHILKLLPSSMEATGEKSSTAIKAPKRGHPRQNAHKHFDINEHLPWMIVLFLLLVLVLIVVCSIRKSSRTLKKGPRQDPSAIVEKAGLKKSLTPTQNREKWIYYRNGHGIDILKLVAAQVGSQWKDIYQFLCNASEREVAAFSNGYTADHERAYAALQHWTIRGPEASLAQLISALRQHRRNDVVEKIRGLMEDTTQLETDKLALPMSPSPLSPSPMPSPNVKLENSTLLTVEPSPLDKNKCFFVDESEPLLRCDSTSSGSSALSRNGSFITKEKKDTVLRQVRLDPCDLQPIFDDMLHILNPEELRVIEEIPQAEDKLDRLFEIIGVKSQEASQTLLDSVYSHLPDLL.

The N-terminal stretch at 1–41 is a signal peptide; it reads MGTRASSITALASCSRTAGQVGATMVAGSLLLLGFLSTITA. The Extracellular portion of the chain corresponds to 42 to 349; it reads QPEQKTLSLP…AHKHFDINEH (308 aa). 4 TNFR-Cys repeats span residues 50–88, 90–131, 133–167, and 170–211; these read LPGT…LRVC, SCPA…DREC, CPPG…EDVR, and QCAR…DNVC. Disulfide bonds link Cys-67/Cys-80, Cys-70/Cys-88, Cys-91/Cys-106, Cys-109/Cys-123, Cys-113/Cys-131, Cys-133/Cys-144, Cys-150/Cys-168, Cys-171/Cys-186, and Cys-192/Cys-211. The N-linked (GlcNAc...) asparagine glycan is linked to Asn-82. N-linked (GlcNAc...) asparagine glycosylation occurs at Asn-141. 2 disordered regions span residues 222–305 and 318–339; these read PPSS…QAPH and EATG…PRQN. 2 stretches are compositionally biased toward polar residues: residues 241 to 262 and 276 to 302; these read VPSS…TASV and PDNT…THQQ. N-linked (GlcNAc...) asparagine glycans are attached at residues Asn-252, Asn-257, Asn-278, and Asn-289. Positions 330–339 are enriched in basic residues; sequence APKRGHPRQN. The helical transmembrane segment at 350-370 threads the bilayer; that stretch reads LPWMIVLFLLLVLVLIVVCSI. The S-palmitoyl cysteine moiety is linked to residue Cys-368. The Cytoplasmic portion of the chain corresponds to 371–655; the sequence is RKSSRTLKKG…SVYSHLPDLL (285 aa). The Death domain maps to 415–498; that stretch reads GIDILKLVAA…DVVEKIRGLM (84 aa).

In terms of assembly, associates with TRADD. Interacts with NGFR. Interacts with CASP8. Post-translationally, oxidized in response to reactive oxygen species (ROS), leading to endocytosis. Detected in spleen B-cells (at protein level). Ubiquitous. Highly expressed in adult spleen, thymus, testis, prostate, ovary, small intestine, colon, brain, lung and kidney, and in fetal brain, liver and lung. Detected at lower levels in adult peripheral blood leukocytes, lung, and in fetal muscle, heart, kidney, small intestine and skin. Detected in T-cells, B-cells and monocytes. In T-cells expression is highest in Th0 cells, intermediate in Th2 cells and lower in Th1 cells. Expressed at low levels in proliferating progenitors in the spinal cord, but is highly expressed by differentiating neurons within the spinal cord and adjacent dorsal root ganglia.

It localises to the cell membrane. Functionally, promotes apoptosis, possibly via a pathway that involves the activation of NF-kappa-B. Can also promote apoptosis mediated by BAX and by the release of cytochrome c from the mitochondria into the cytoplasm. Trophic-factor deprivation triggers the cleavage of surface APP by beta-secretase to release sAPP-beta which is further cleaved to release an N-terminal fragment of APP (N-APP). Negatively regulates oligodendrocyte survival, maturation and myelination. Plays a role in signaling cascades triggered by stimulation of T-cell receptors, in the adaptive immune response and in the regulation of T-cell differentiation and proliferation. Negatively regulates T-cell responses and the release of cytokines such as IL4, IL5, IL10, IL13 and IFNG by Th2 cells. Negatively regulates the production of IgG, IgM and IgM in response to antigens. May inhibit the activation of JNK in response to T-cell stimulation. Also acts as a regulator of pyroptosis: recruits CASP8 in response to reactive oxygen species (ROS) and subsequent oxidation, leading to activation of GSDMC. The sequence is that of Tumor necrosis factor receptor superfamily member 21 (Tnfrsf21) from Mus musculus (Mouse).